The sequence spans 499 residues: Glycerol kinase (499 aa).

T13 is an ADP binding site. ATP is bound by residues T13, T14, and S15. Residue T13 participates in sn-glycerol 3-phosphate binding. ADP is bound at residue R17. R83, E84, Y135, and D245 together coordinate sn-glycerol 3-phosphate. Residues R83, E84, Y135, D245, and Q246 each contribute to the glycerol site. The ADP site is built by T267 and G310. T267, G310, Q314, and G411 together coordinate ATP. 2 residues coordinate ADP: G411 and N415.

Belongs to the FGGY kinase family.

The enzyme catalyses glycerol + ATP = sn-glycerol 3-phosphate + ADP + H(+). It participates in polyol metabolism; glycerol degradation via glycerol kinase pathway; sn-glycerol 3-phosphate from glycerol: step 1/1. Its activity is regulated as follows. Inhibited by fructose 1,6-bisphosphate (FBP). In terms of biological role, key enzyme in the regulation of glycerol uptake and metabolism. Catalyzes the phosphorylation of glycerol to yield sn-glycerol 3-phosphate. In Xanthomonas campestris pv. campestris (strain 8004), this protein is Glycerol kinase.